The following is a 162-amino-acid chain: Cyclic pyranopterin monophosphate synthase (162 aa).

Substrate is bound by residues 75–77 (MCH) and 116–117 (ME). D131 is a catalytic residue.

Belongs to the MoaC family. Homohexamer; trimer of dimers.

The enzyme catalyses (8S)-3',8-cyclo-7,8-dihydroguanosine 5'-triphosphate = cyclic pyranopterin phosphate + diphosphate. It functions in the pathway cofactor biosynthesis; molybdopterin biosynthesis. Functionally, catalyzes the conversion of (8S)-3',8-cyclo-7,8-dihydroguanosine 5'-triphosphate to cyclic pyranopterin monophosphate (cPMP). The protein is Cyclic pyranopterin monophosphate synthase of Staphylococcus epidermidis (strain ATCC 35984 / DSM 28319 / BCRC 17069 / CCUG 31568 / BM 3577 / RP62A).